Here is a 64-residue protein sequence, read N- to C-terminus: Beta-defensin 1 (64 aa).

A signal peptide spans 1-20 (MRLHRLLLVFLLMVLLPVPG). The propeptide occupies 21-23 (LLK). Disulfide bonds link Cys-31–Cys-60, Cys-38–Cys-53, and Cys-43–Cys-61.

The protein belongs to the beta-defensin family. Monomer. Homodimer.

The protein resides in the secreted. It localises to the membrane. In terms of biological role, has bactericidal activity. May act as a ligand for C-C chemokine receptor CCR6. Positively regulates the sperm motility and bactericidal activity in a CCR6-dependent manner. Binds to CCR6 and triggers Ca2+ mobilization in the sperm which is important for its motility. In Sus scrofa (Pig), this protein is Beta-defensin 1 (DEFB1).